The following is a 469-amino-acid chain: Deoxyribodipyrimidine photo-lyase (469 aa).

In terms of domain architecture, Photolyase/cryptochrome alpha/beta spans 1–133; the sequence is MRLVWFRRDL…IWSAFDDKCV (133 aa). E107 contacts (6R)-5,10-methylene-5,6,7,8-tetrahydrofolate.

The protein belongs to the DNA photolyase class-1 family. In terms of assembly, monomer. The cofactor is FAD. (6R)-5,10-methylene-5,6,7,8-tetrahydrofolate serves as cofactor.

It catalyses the reaction cyclobutadipyrimidine (in DNA) = 2 pyrimidine residues (in DNA).. In terms of biological role, involved in repair of UV radiation-induced DNA damage. Catalyzes the light-dependent monomerization (300-600 nm) of cyclobutyl pyrimidine dimers (in cis-syn configuration), which are formed between adjacent bases on the same DNA strand upon exposure to ultraviolet radiation. In Vibrio cholerae serotype O1 (strain ATCC 39315 / El Tor Inaba N16961), this protein is Deoxyribodipyrimidine photo-lyase (phrA).